A 610-amino-acid chain; its full sequence is L-galactono-1,4-lactone dehydrogenase, mitochondrial (610 aa).

A mitochondrion-targeting transit peptide spans 1–35 (MLRSLLLRRSVGHSLGTLSPSSSTIRSSFSPHRTL). The tract at residues 17-61 (TLSPSSSTIRSSFSPHRTLCTTGQTLTPPPPPPPRPPPPPPATAS) is disordered. Low complexity predominate over residues 19 to 30 (SPSSSTIRSSFS). Residues 36–101 (CTTGQTLTPP…AKHKKAQIFR (66 aa)) constitute a propeptide, removed in mature form. Over residues 43–58 (TPPPPPPPRPPPPPPA) the composition is skewed to pro residues. The helical transmembrane segment at 68–84 (YAGYAALAIFSGVATYF) threads the bilayer. The 136-residue stretch at 123–258 (TRNFNQPENL…TPAKGTIELS (136 aa)) folds into the FAD-binding PCMH-type domain.

Requires FAD as cofactor.

It localises to the mitochondrion membrane. It carries out the reaction L-galactono-1,4-lactone + 4 Fe(III)-[cytochrome c] = L-dehydroascorbate + 4 Fe(II)-[cytochrome c] + 5 H(+). The catalysed reaction is L-gulono-1,4-lactone + 2 Fe(III)-[cytochrome c] = L-ascorbate + 2 Fe(II)-[cytochrome c] + 3 H(+). Its pathway is cofactor biosynthesis; L-ascorbate biosynthesis. Its function is as follows. Involved in the biosynthesis of ascorbate. Catalyzes the final step of ascorbate biosynthesis. Uses L-galactono-1,4-lactone and L-gulono-1,4-lactone as substrates, but not D-galactono-1,4-lactone, D-gulono-1,4-lactone, L-mannono-1,4-lactone or D-galactonic acid. Also active with phenazine methosulfate and 1,4-benzoquinone as electron acceptors. Involved in the regulation of the accumulation of the mitochondrial respiratory complex I. Structural part of one of the plant-specific mitochondrial complex I assembly intermediates, lacking the whole distal (PD) module. Prevents the binding of the plant specific P1 protein (CPN60/HSP60), responsible for the linkage of the proximal (PP) to the distal (PD) module. This chain is L-galactono-1,4-lactone dehydrogenase, mitochondrial, found in Arabidopsis thaliana (Mouse-ear cress).